We begin with the raw amino-acid sequence, 232 residues long: 2,3-bisphosphoglycerate-dependent phosphoglycerate mutase (232 aa).

Residues 10–17 (RHGESQWN), 23–24 (TG), R62, 89–92 (ERHY), K100, 116–117 (RR), and 185–186 (GN) each bind substrate. H11 acts as the Tele-phosphohistidine intermediate in catalysis. The active-site Proton donor/acceptor is the E89.

It belongs to the phosphoglycerate mutase family. BPG-dependent PGAM subfamily. Homodimer.

It carries out the reaction (2R)-2-phosphoglycerate = (2R)-3-phosphoglycerate. The protein operates within carbohydrate degradation; glycolysis; pyruvate from D-glyceraldehyde 3-phosphate: step 3/5. Catalyzes the interconversion of 2-phosphoglycerate and 3-phosphoglycerate. In Blochmanniella floridana, this protein is 2,3-bisphosphoglycerate-dependent phosphoglycerate mutase.